The chain runs to 649 residues: Solute carrier family 22 member 16 (649 aa).

The helical transmembrane segment at 19-39 (FQIVLYLICAYQSLSCGIHYL) threads the bilayer. N-linked (GlcNAc...) asparagine glycosylation is found at Asn65 and Asn108. 5 helical membrane-spanning segments follow: residues 156 to 176 (MIQP…SYLS), 190 to 210 (IGVF…SFMI), 214 to 234 (FLVM…MEII), 244 to 264 (IHLN…SYLL), and 268 to 288 (WLYQ…CWML). The N-linked (GlcNAc...) asparagine glycan is linked to Asn315. Helical transmembrane passes span 356 to 376 (AKMT…YYMF), 389 to 409 (LYLL…CIWL), 417 to 437 (TMLL…VMPS), 445 to 465 (MVAL…YLYT), 475 to 495 (CLAV…IPFT), and 501 to 521 (VWIF…GLLS). The span at 530–544 (TPMKSTWETTEQQVP) shows a compositional bias: polar residues. Disordered stretches follow at residues 530-560 (TPMK…SFER) and 579-649 (SPDA…LGGF).

The protein belongs to the major facilitator (TC 2.A.1) superfamily. Organic cation transporter (TC 2.A.1.19) family.

The protein resides in the cell membrane. It carries out the reaction (R)-carnitine(in) = (R)-carnitine(out). The catalysed reaction is spermidine(in) = spermidine(out). In terms of biological role, facilitative organic cation transporter that mediates the transport of carnitine as well as the polyamine spermidine. Mediates the partially Na(+)-dependent bidirectional transport of carnitine. May mediate L-carnitine secretion from testis epididymal epithelium into the lumen which is involved in the maturation of spermatozoa. This Mus musculus (Mouse) protein is Solute carrier family 22 member 16.